Reading from the N-terminus, the 1401-residue chain is Condensin complex subunit 1 (1401 aa).

The interval 1-603 (MAPQMYEFHL…TVCKNKPNMS (603 aa)) is interactions with SMC2 and SMC4. S20 and S585 each carry phosphoserine. Polar residues predominate over residues 576 to 596 (STQEKNPRESTGNMVTGQTVC). Disordered regions lie at residues 576-611 (STQEKNPRESTGNMVTGQTVCKNKPNMSDPEESRGN), 956-978 (REEQEHKTKDPKEKNTSSETTME), and 1303-1401 (LEIG…RHRS). Residues 956-971 (REEQEHKTKDPKEKNT) are compositionally biased toward basic and acidic residues. Positions 1308 to 1336 (AGSQRAPSAKKPSTGSRYQPLASTASDND) are enriched in polar residues. Phosphoserine occurs at positions 1310, 1315, and 1330. T1331 is modified (phosphothreonine). At S1333 the chain carries Phosphoserine. T1339 carries the phosphothreonine modification. Residues 1342–1362 (PRRTTRRHPNTQQRASKKKPK) carry the Bipartite nuclear localization signal motif. Basic residues predominate over residues 1345–1362 (TTRRHPNTQQRASKKKPK). 5 positions are modified to phosphoserine: S1366, S1367, S1370, S1371, and S1376. The span at 1369–1382 (ESSEEDLSAEMTED) shows a compositional bias: acidic residues. Phosphothreonine; by CDK1 is present on residues T1384 and T1389. A Phosphoserine modification is found at S1395.

Belongs to the CND1 (condensin subunit 1) family. As to quaternary structure, component of the condensin complex, which contains the SMC2 and SMC4 heterodimer, and three non SMC subunits that probably regulate the complex: NCAPH/BRRN1, NCAPD2/CAPD2 and NCAPG. Interacts with histones H1 and H3. Post-translationally, phosphorylated by CDK1. Its phosphorylation, as well as that of NCAPH and NCAPG subunits, activates the condensin complex and is required for chromosome condensation.

It localises to the nucleus. The protein localises to the cytoplasm. Its subcellular location is the chromosome. Functionally, regulatory subunit of the condensin complex, a complex required for conversion of interphase chromatin into mitotic-like condense chromosomes. The condensin complex probably introduces positive supercoils into relaxed DNA in the presence of type I topoisomerases and converts nicked DNA into positive knotted forms in the presence of type II topoisomerases. May target the condensin complex to DNA via its C-terminal domain. May promote the resolution of double-strand DNA catenanes (intertwines) between sister chromatids. Condensin-mediated compaction likely increases tension in catenated sister chromatids, providing directionality for type II topoisomerase-mediated strand exchanges toward chromatid decatenation. Required for decatenation of non-centromeric ultrafine DNA bridges during anaphase. Early in neurogenesis, may play an essential role to ensure accurate mitotic chromosome condensation in neuron stem cells, ultimately affecting neuron pool and cortex size. This is Condensin complex subunit 1 from Homo sapiens (Human).